We begin with the raw amino-acid sequence, 501 residues long: MESITSIEMYVADRNAEWLGVPRLVLMENAGAAVARNVLRKFPTAKRILVVCGTGDNGGDGYVAARHLHAAGRTVRVIALGEPREELARINYQAVTRLWGVEVKAAQLPLELLALQDWFMWAEVIVDAVLGTGIRGVLREPHATAIELMNISPAPKVAVDVPSGLDPDTGEVRDKAVRAALTVTFHKAKRGLLAPGAQRYVGELVVEPIGIPPEAELVVGPGDFAYLNFTRRADSKKGDHGRVLVIGGSLEYSGAPVYVALAALRAGVDLAVIAAPEPAAYAAKAISPDIIAIPLEGPRLSTKHVDKLASLAERFNVVAMGPGLGVEEETQEAVRELFRRLAGKRAMVIDADALKALRGVRASGAVVYTPHAGEFKALTGAEPPQSLSERMAVVREQAAALGGVILLKGRYDVISDGVRVKVNMTGTPAMTVGGTGDVLTGLVAAFLTKTSDPLEAAAVAAFVNGLAGEDAAAELGFHITASDLIERLPRVIRRYAFESIR.

The interval 1–221 (MESITSIEMY…PPEAELVVGP (221 aa)) is NAD(P)H-hydrate epimerase. Residues 9–217 (MYVADRNAEW…PIGIPPEAEL (209 aa)) form the YjeF N-terminal domain. The NADPHX 1; for epimerase activity stretch occupies residues 56 to 60 (DNGGD). Asn57 and Asp127 together coordinate K(+). The interval 131-137 (GTGIRGV) is NADPHX 1; for epimerase activity. Asp160 contributes to the (6S)-NADPHX binding site. Ser163 is a binding site for K(+). The 276-residue stretch at 220–495 (GPGDFAYLNF…ERLPRVIRRY (276 aa)) folds into the YjeF C-terminal domain. Residues 221-501 (PGDFAYLNFT…IRRYAFESIR (281 aa)) are ADP-dependent (S)-NAD(P)H-hydrate dehydratase. Gly323 serves as a coordination point for (6S)-NADPHX. The interval 371–377 (HAGEFKA) is NADPHX 2; for dehydratase activity. Residues 408-412 (KGRYD) and 427-436 (TPAMTVGGTG) each bind ADP. Asp437 provides a ligand contact to (6S)-NADPHX.

The protein in the N-terminal section; belongs to the NnrE/AIBP family. In the C-terminal section; belongs to the NnrD/CARKD family. The cofactor is K(+).

It catalyses the reaction (6S)-NADHX + ADP = AMP + phosphate + NADH + H(+). It carries out the reaction (6S)-NADPHX + ADP = AMP + phosphate + NADPH + H(+). The catalysed reaction is (6R)-NADHX = (6S)-NADHX. The enzyme catalyses (6R)-NADPHX = (6S)-NADPHX. Its function is as follows. Bifunctional enzyme that catalyzes the epimerization of the S- and R-forms of NAD(P)HX and the dehydration of the S-form of NAD(P)HX at the expense of ADP, which is converted to AMP. This allows the repair of both epimers of NAD(P)HX, a damaged form of NAD(P)H that is a result of enzymatic or heat-dependent hydration. The chain is Bifunctional NAD(P)H-hydrate repair enzyme Nnr (nnr) from Pyrobaculum aerophilum (strain ATCC 51768 / DSM 7523 / JCM 9630 / CIP 104966 / NBRC 100827 / IM2).